Here is a 314-residue protein sequence, read N- to C-terminus: MGLLDSEPGSVLNVVSTALNDTVEFYRWTWSIADKRVENWPLMQSPWPTLSISTLYLLFVWLGPKWMKDREPFQMRLVLIIYNFGMVLLNFFIFRELFMGSYNAGYSYICQSVDYSNNVNEVRIAAALWWYFVSKGVEYLDTVFFILRKKNNQVSFLHVYHHCTMFTLWWIGIKWVAGGQAFFGAQMNSFIHVIMYSYYGLAAFGPWIQKYLWWKRYLTMLQLVQFHVTIGHTALSLYTDCPFPKWMHWALIAYAISFIFLFLNFYIRTYKEPKKPKTGKTAMNGISANGVSKSEKQLVIENGKKQKNGKAKGD.

Asparagine 20 carries N-linked (GlcNAc...) asparagine glycosylation. The next 7 membrane-spanning stretches (helical) occupy residues 42–62 (LMQS…FVWL), 78–98 (VLII…RELF), 127–147 (ALWW…FFIL), 165–185 (MFTL…FFGA), 188–208 (NSFI…GPWI), 217–237 (YLTM…ALSL), and 247–267 (MHWA…NFYI). Positions 274–314 (KKPKTGKTAMNGISANGVSKSEKQLVIENGKKQKNGKAKGD) are disordered. Residues 293 to 304 (KSEKQLVIENGK) are compositionally biased toward basic and acidic residues. Basic residues predominate over residues 305–314 (KQKNGKAKGD). Positions 310-314 (KAKGD) match the Di-lysine motif motif.

Belongs to the ELO family. ELOVL4 subfamily. Oligomer. Post-translationally, N-glycosylated. Expressed mainly in retina. Also expressed in skin and thymus.

It localises to the endoplasmic reticulum membrane. The enzyme catalyses a very-long-chain acyl-CoA + malonyl-CoA + H(+) = a very-long-chain 3-oxoacyl-CoA + CO2 + CoA. It catalyses the reaction hexacosanoyl-CoA + malonyl-CoA + H(+) = 3-oxooctacosanyol-CoA + CO2 + CoA. The catalysed reaction is octacosanoyl-CoA + malonyl-CoA + H(+) = 3-oxo-triacontanoyl-CoA + CO2 + CoA. It carries out the reaction triacontanoyl-CoA + malonyl-CoA + H(+) = 3-oxo-dotriacontanoyl-CoA + CO2 + CoA. The enzyme catalyses (19Z,22Z,25Z,28Z,31Z)-tetratriacontapentaenoyl-CoA + malonyl-CoA + H(+) = 3-oxo-(21Z,24Z,27Z,30Z,33Z)-hexatriacontapentaenoyl-CoA + CO2 + CoA. It catalyses the reaction (4Z,7Z,10Z,13Z,16Z,19Z)-docosahexaenoyl-CoA + malonyl-CoA + H(+) = 3-oxo-(6Z,9Z,12Z,15Z,18Z,21Z)-tetracosahexaenoyl-CoA + CO2 + CoA. The catalysed reaction is (7Z,10Z,13Z,16Z)-docosatetraenoyl-CoA + malonyl-CoA + H(+) = (9Z,12Z,15Z,18Z)-3-oxotetracosatetraenoyl-CoA + CO2 + CoA. It carries out the reaction (11Z,14Z,17Z,20Z,23Z)-hexacosapentaenoyl-CoA + malonyl-CoA + H(+) = 3-oxo-(13Z,16Z,19Z,22Z,25Z)-octacosapentaenoyl-CoA + CO2 + CoA. The enzyme catalyses (13Z,16Z,19Z,22Z,25Z)-octacosapentaenoyl-CoA + malonyl-CoA + H(+) = 3-oxo-(15Z,18Z,21Z,24Z,27Z)-triacontapentaenoyl-CoA + CO2 + CoA. It catalyses the reaction (15Z,18Z,21Z,24Z,27Z)-triacontapentaenoyl-CoA + malonyl-CoA + H(+) = 3-oxo-(17Z,20Z,23Z,26Z,29Z)-dotriacontapentaenoyl-CoA + CO2 + CoA. The catalysed reaction is (17Z,20Z,23Z,26Z,29Z)-dotriacontapentaenoyl-CoA + malonyl-CoA + H(+) = 3-oxo-(19Z,22Z,25Z,28Z,31Z)-tetratriacontapentaenoyl-CoA + CO2 + CoA. It carries out the reaction (21Z,24Z,27Z,30Z,33Z)-hexatriacontapentaenoyl-CoA + malonyl-CoA + H(+) = 3-oxo-(23Z,26Z,29Z,32Z,35Z)-octatriacontapentaenoyl-CoA + CO2 + CoA. The enzyme catalyses (11Z,14Z,17Z,20Z)-hexacosatetraenoyl-CoA + malonyl-CoA + H(+) = (13Z,16Z,19Z,22Z)-3-oxooctacosatetraenoyl-CoA + CO2 + CoA. It catalyses the reaction (13Z,16Z,19Z,22Z)-octacosatetraenoyl-CoA + malonyl-CoA + H(+) = 3-oxo-(15Z,18Z,21Z,24Z)-triacontatetraenoyl-CoA + CO2 + CoA. The catalysed reaction is (15Z,18Z,21Z,24Z)-triacontatetraenoyl-CoA + malonyl-CoA + H(+) = 3-oxo-(17Z,20Z,23Z,26Z)-dotriacontatetraenoyl-CoA + CO2 + CoA. It carries out the reaction (17Z,20Z,23Z,26Z)-dotriacontatetraenoyl-CoA + malonyl-CoA + H(+) = 3-oxo-(19Z,22Z,25Z,28Z)-tetratriacontatetraenoyl-CoA + CO2 + CoA. The enzyme catalyses (19Z,22Z,25Z,28Z)-tetratriacontatetraenoyl-CoA + malonyl-CoA + H(+) = 3-oxo-(21Z,24Z,27Z,30Z)-hexatriacontatetraenoyl-CoA + CO2 + CoA. It catalyses the reaction (21Z,24Z,27Z,30Z)-hexatriacontatetraenoyl-CoA + malonyl-CoA + H(+) = 3-oxo-(23Z,26Z,29Z,32Z)-octatriacontatetraenoyl-CoA + CO2 + CoA. The catalysed reaction is (6Z,9Z,12Z,15Z,18Z,21Z)-tetracosahexaenoyl-CoA + malonyl-CoA + H(+) = 3-oxo-(8Z,11Z,14Z,17Z,20Z,23Z)-hexacosahexaenoyl-CoA + CO2 + CoA. It carries out the reaction (8Z,11Z,14Z,17Z,20Z,23Z)-hexacosahexaenoyl-CoA + malonyl-CoA + H(+) = 3-oxo-(10Z,13Z,16Z,19Z,22Z,25Z)-octacosahexaenoyl-CoA + CO2 + CoA. The enzyme catalyses (10Z,13Z,16Z,19Z,22Z,25Z)-octacosahexaenoyl-CoA + malonyl-CoA + H(+) = 3-oxo-(12Z,15Z,18Z,21Z,24Z,27Z)-triacontahexaenoyl-CoA + CO2 + CoA. It catalyses the reaction (12Z,15Z,18Z,21Z,24Z,27Z)-triacontahexaenoyl-CoA + malonyl-CoA + H(+) = 3-oxo-(14Z,17Z,20Z,23Z,26Z,29Z)-dotriacontahexaenoyl-CoA + CO2 + CoA. The catalysed reaction is (14Z,17Z,20Z,23Z,26Z,29Z)-dotriacontahexaenoyl-CoA + malonyl-CoA + H(+) = 3-oxo-(16Z,19Z,22Z,25Z,28Z,31Z)-tetratriacontahexaenoyl-CoA + CO2 + CoA. It carries out the reaction (16Z,19Z,22Z,25Z,28Z,31Z)-tetratriacontahexaenoyl-CoA + malonyl-CoA + H(+) = 3-oxo-(18Z,21Z,24Z,27Z,30Z,33Z)-hexatriacontahexaenoyl-CoA + CO2 + CoA. The enzyme catalyses (9Z,12Z,15Z,18Z,21Z)-tetracosapentaenoyl-CoA + malonyl-CoA + H(+) = 3-oxo-(11Z,14Z,17Z,20Z,23Z)-hexacosapentaenoyl-CoA + CO2 + CoA. It participates in lipid metabolism; fatty acid biosynthesis. Functionally, catalyzes the first and rate-limiting reaction of the four reactions that constitute the long-chain fatty acids elongation cycle. This endoplasmic reticulum-bound enzymatic process allows the addition of 2 carbons to the chain of long- and very long-chain fatty acids (VLCFAs) per cycle. Condensing enzyme that catalyzes the synthesis of very long chain saturated (VLC-SFA) and polyunsaturated (PUFA) fatty acids that are involved in multiple biological processes as precursors of membrane lipids and lipid mediators. May play a critical role in early brain and skin development. In Macaca fascicularis (Crab-eating macaque), this protein is Very long chain fatty acid elongase 4.